An 87-amino-acid polypeptide reads, in one-letter code: Small ribosomal subunit protein uS19m (87 aa).

This sequence belongs to the universal ribosomal protein uS19 family.

It is found in the mitochondrion. This Dictyostelium citrinum (Slime mold) protein is Small ribosomal subunit protein uS19m (mrps19).